The following is a 97-amino-acid chain: Large ribosomal subunit protein uL23 (97 aa).

It belongs to the universal ribosomal protein uL23 family. Part of the 50S ribosomal subunit. Contacts protein L29, and trigger factor when it is bound to the ribosome.

Functionally, one of the early assembly proteins it binds 23S rRNA. One of the proteins that surrounds the polypeptide exit tunnel on the outside of the ribosome. Forms the main docking site for trigger factor binding to the ribosome. The sequence is that of Large ribosomal subunit protein uL23 from Methylococcus capsulatus (strain ATCC 33009 / NCIMB 11132 / Bath).